Consider the following 189-residue polypeptide: Elongation factor P (189 aa).

This sequence belongs to the elongation factor P family.

It is found in the cytoplasm. It participates in protein biosynthesis; polypeptide chain elongation. Involved in peptide bond synthesis. Stimulates efficient translation and peptide-bond synthesis on native or reconstituted 70S ribosomes in vitro. Probably functions indirectly by altering the affinity of the ribosome for aminoacyl-tRNA, thus increasing their reactivity as acceptors for peptidyl transferase. The sequence is that of Elongation factor P from Pseudomonas savastanoi pv. phaseolicola (strain 1448A / Race 6) (Pseudomonas syringae pv. phaseolicola (strain 1448A / Race 6)).